A 509-amino-acid chain; its full sequence is MISTDSLARIALDLQLGISHQDRFHRLIQSVRSLLHSDASALLRYEGGQFIPLAIDGLMQDVLGRRFALADHPRMEAIARAGDVVRFPADSNLPDPYDGLIPDHDDFRVHACVGLPLFSDQTLIGALTIDGMNPTQFDGISDEELRLVGALAAAALSNALLLERLARQSSEPLAPSTQNGPGRAEMIGRSPAMDRLRHEINVVASSELNVLILGETGVGKELIAKAVHQGSPRASAPLVYLNCAALPESVAESELFGHVKGAFTGAIHNRAGKFELADKGTLFLDEIGELSLSLQAKLLRVLQYGDLQRIGDDTPLKVNVRILAATNRDLKQAVVEGQFRSDLYHRLSVFPIHAPALRERPDDIPLLAGYFCERCRVSLGLERLRIEPRALQLLGSYDWPGNVRELEHAIHRAAVLARAEQGSQAPALECHHFNLAAAGAPSSSRIPVEQVAQQMTAGMGLRTATDAFQLQLIEQTLAAQHGNWAATARALEMDGGNLHRLARRLGLKP.

D56 is modified (4-aspartylphosphate). Positions 186 to 415 (MIGRSPAMDR…LEHAIHRAAV (230 aa)) constitute a Sigma-54 factor interaction domain. ATP-binding positions include 214-221 (GETGVGKE) and 277-286 (ADKGTLFLDE). The H-T-H motif DNA-binding region spans 484 to 503 (WAATARALEMDGGNLHRLAR).

The protein operates within nitrogen metabolism; nitric oxide reduction. In terms of biological role, required for the expression of anaerobic nitric oxide (NO) reductase, acts as a transcriptional activator for at least the norVW operon. Activation also requires sigma-54. The polypeptide is Anaerobic nitric oxide reductase transcription regulator NorR (Aeromonas salmonicida (strain A449)).